A 959-amino-acid chain; its full sequence is Probable transport protein MmpL4 (959 aa).

11 helical membrane-spanning segments follow: residues 25 to 45, 205 to 225, 239 to 259, 300 to 320, 333 to 353, 381 to 401, 766 to 786, 790 to 810, 818 to 838, 872 to 892, and 902 to 922; these read FAVP…VFIP, VIVI…VILL, VVAL…VNLL, FHVI…LSFA, AVGM…VLTV, WPLP…LALP, WDLV…MLII, FVAA…SFGL, ILGI…LLAV, VVTN…VSDL, and IGLG…PSIA.

Belongs to the resistance-nodulation-cell division (RND) (TC 2.A.6) family. MmpL subfamily.

The protein resides in the cell membrane. The sequence is that of Probable transport protein MmpL4 (mmpL4) from Mycobacterium leprae (strain TN).